Here is a 198-residue protein sequence, read N- to C-terminus: MKLYSLSVLHKGSTKANLLKATYDLSSFSFFQRSSVQEFMTFTSALIVERSALGSRASVKEQEYLCHVYVRNDNLGGVVIADSEYPSRVCFTLLDKVLDEFSRQVNSIDWPSGSPATIQYTALDSHLARYQNPREADAMTKVQAELDETKIILHNTMESLLERGEKLDDLVQKSEHLGNQSKAFYKTARKQNSCCEIM.

In terms of domain architecture, Longin spans 8–131 (VLHKGSTKAN…ALDSHLARYQ (124 aa)). Residues 138-198 (AMTKVQAELD…RKQNSCCEIM (61 aa)) form the v-SNARE coiled-coil homology domain. Cysteine 194 is lipidated: S-palmitoyl cysteine. Cysteine 195 is modified (cysteine methyl ester). Cysteine 195 is lipidated: S-farnesyl cysteine. The propeptide at 196-198 (EIM) is removed in mature form.

Belongs to the synaptobrevin family. Palmitoylated; catalyzes its own palmitoylation. Palmitoylation is required for Golgi targeting. In terms of processing, farnesylation is required for Golgi targeting.

Its subcellular location is the cytoplasm. The protein resides in the cytosol. The protein localises to the cytoplasmic vesicle membrane. It localises to the golgi apparatus membrane. In terms of biological role, vesicular soluble NSF attachment protein receptor (v-SNARE) mediating vesicle docking and fusion to a specific acceptor cellular compartment. Functions in endoplasmic reticulum to Golgi transport; as part of a SNARE complex composed of GOSR1, GOSR2 and STX5. Functions in early/recycling endosome to TGN transport; as part of a SNARE complex composed of BET1L, GOSR1 and STX5. Has a S-palmitoyl transferase activity. This is Synaptobrevin homolog YKT6 (ykt6) from Danio rerio (Zebrafish).